The following is a 410-amino-acid chain: MAFEKIKVANPIVEMDGDEMTRVIWKSIKDKLITPFVELDIKYFDLGLPHRDATDDKVTIESAEATKKYNVAIKCATITPDEGRVTEFGLKQMWRSPNGTIRNILNGTVFREPIICKNVPKLVPGWTKPICIGRHAFGDQYRATDAVIKGPGKLTMTFEGKDGKTETEVFTFTGEGGVAMAMYNTDESIRAFADASMNTAYEKKWPLYLSTKNTILKKYDGRFKDIFQEVYEASWKSKYDAAGIWYEHRLIDDMVAYALKSEGGYVWACKNYDGDVQSDFLAQGFGSLGLMTSVLVCPDGKTIEAEAAHGTVTRHFRVHQKGGETSTNSIASIFAWTRGLAHRAKLDDNAKLLDFTEKLEAACVGTVESGKMTKDLALIIHGSKLSRDTYLNTEEFIDAVAAELKERLNA.

NADP(+)-binding positions include 77 to 79 (TIT) and Arg84. A substrate-binding site is contributed by Thr79. Residues 96-102 (SPNGTIR), Arg111, and Arg134 contribute to the substrate site. Lys260 lines the NADP(+) pocket. Residues Asp275 and Asp279 each contribute to the Mn(2+) site. Residues 310–315 (GTVTRH) and Asn328 contribute to the NADP(+) site.

It belongs to the isocitrate and isopropylmalate dehydrogenases family. The cofactor is Mg(2+). Mn(2+) is required as a cofactor.

The protein resides in the cytoplasm. It localises to the cytosol. It catalyses the reaction D-threo-isocitrate + NADP(+) = 2-oxoglutarate + CO2 + NADPH. In terms of biological role, may supply 2-oxoglutarate for amino acid biosynthesis and ammonia assimilation via the glutamine synthetase/glutamate synthase (GS/GOGAT) pathway. May be involved in the production of NADPH to promote redox signaling or homeostasis in response to oxidative stress, or redox signaling linked to defense responses. This chain is Cytosolic isocitrate dehydrogenase [NADP], found in Arabidopsis thaliana (Mouse-ear cress).